A 57-amino-acid polypeptide reads, in one-letter code: Large ribosomal subunit protein bL32 (57 aa).

The interval 1–23 (MAVPARHTSSAKKNRRRTHYKLT) is disordered. Basic residues predominate over residues 9–20 (SSAKKNRRRTHY).

It belongs to the bacterial ribosomal protein bL32 family.

This chain is Large ribosomal subunit protein bL32, found in Lactococcus lactis subsp. cremoris (strain MG1363).